A 233-amino-acid polypeptide reads, in one-letter code: Choline-phosphate cytidylyltransferase (233 aa).

The CDP-choline site is built by L6, A8, G9, Y80, S85, and A101. D102 serves as a coordination point for Mg(2+). CDP-choline is bound at residue Y187. The Mg(2+) site is built by E213 and D215.

Belongs to the LicC/PntC cytidylyltransferase family. Mg(2+) serves as cofactor.

The enzyme catalyses phosphocholine + CTP + H(+) = CDP-choline + diphosphate. Its pathway is lipopolysaccharide biosynthesis. Its function is as follows. Cytidylyltransferase involved in the biosynthesis of lipopolysaccharides (LPS), a necessary component and antigenic determinant of the outer membrane that has been shown to be an important factor in the host-parasite interaction in a number of Gram-negative species. Catalyzes the activation of phosphocholine (P-Cho) to CDP-choline (CDP-Cho). LicC is critical for the expression of the 6A2-specific epitope. This Haemophilus influenzae (strain ATCC 51907 / DSM 11121 / KW20 / Rd) protein is Choline-phosphate cytidylyltransferase.